An 89-amino-acid polypeptide reads, in one-letter code: Large ribosomal subunit protein bL31B (89 aa).

It belongs to the bacterial ribosomal protein bL31 family. Type B subfamily. In terms of assembly, part of the 50S ribosomal subunit.

The chain is Large ribosomal subunit protein bL31B from Corynebacterium aurimucosum (strain ATCC 700975 / DSM 44827 / CIP 107346 / CN-1) (Corynebacterium nigricans).